The primary structure comprises 153 residues: Nucleoside diphosphate kinase (153 aa).

ATP-binding residues include K11, F59, R87, T93, R104, and N114. The active-site Pros-phosphohistidine intermediate is H117.

It belongs to the NDK family. Homotrimer. Requires Mg(2+) as cofactor.

It carries out the reaction a 2'-deoxyribonucleoside 5'-diphosphate + ATP = a 2'-deoxyribonucleoside 5'-triphosphate + ADP. The catalysed reaction is a ribonucleoside 5'-diphosphate + ATP = a ribonucleoside 5'-triphosphate + ADP. Functionally, major role in the synthesis of nucleoside triphosphates other than ATP. The ATP gamma phosphate is transferred to the NDP beta phosphate via a ping-pong mechanism, using a phosphorylated active-site intermediate. The protein is Nucleoside diphosphate kinase (ndk1) of Aspergillus fumigatus (strain ATCC MYA-4609 / CBS 101355 / FGSC A1100 / Af293) (Neosartorya fumigata).